A 411-amino-acid chain; its full sequence is 2,3-bisphosphoglycerate-independent phosphoglycerate mutase (411 aa).

This sequence belongs to the BPG-independent phosphoglycerate mutase family. A-PGAM subfamily.

It catalyses the reaction (2R)-2-phosphoglycerate = (2R)-3-phosphoglycerate. It participates in carbohydrate degradation; glycolysis; pyruvate from D-glyceraldehyde 3-phosphate: step 3/5. In terms of biological role, catalyzes the interconversion of 2-phosphoglycerate and 3-phosphoglycerate. The protein is 2,3-bisphosphoglycerate-independent phosphoglycerate mutase of Pyrobaculum arsenaticum (strain DSM 13514 / JCM 11321 / PZ6).